A 130-amino-acid polypeptide reads, in one-letter code: Small ribosomal subunit protein uS8 (130 aa).

This sequence belongs to the universal ribosomal protein uS8 family. Part of the 30S ribosomal subunit. Contacts proteins S5 and S12.

Its function is as follows. One of the primary rRNA binding proteins, it binds directly to 16S rRNA central domain where it helps coordinate assembly of the platform of the 30S subunit. This is Small ribosomal subunit protein uS8 from Vibrio vulnificus (strain CMCP6).